We begin with the raw amino-acid sequence, 460 residues long: ATP synthase subunit beta (460 aa).

Position 150 to 157 (150 to 157 (GGAGVGKT)) interacts with ATP.

Belongs to the ATPase alpha/beta chains family. In terms of assembly, F-type ATPases have 2 components, CF(1) - the catalytic core - and CF(0) - the membrane proton channel. CF(1) has five subunits: alpha(3), beta(3), gamma(1), delta(1), epsilon(1). CF(0) has three main subunits: a(1), b(2) and c(9-12). The alpha and beta chains form an alternating ring which encloses part of the gamma chain. CF(1) is attached to CF(0) by a central stalk formed by the gamma and epsilon chains, while a peripheral stalk is formed by the delta and b chains.

It is found in the cell inner membrane. It catalyses the reaction ATP + H2O + 4 H(+)(in) = ADP + phosphate + 5 H(+)(out). Produces ATP from ADP in the presence of a proton gradient across the membrane. The catalytic sites are hosted primarily by the beta subunits. The chain is ATP synthase subunit beta from Enterobacter sp. (strain 638).